A 228-amino-acid polypeptide reads, in one-letter code: MYQETKRYIERKLKKIEYIYTKLPDGYEDIEIRYRKVRDEIGILQNVVNGLTYYEYGGTVMKNVAHWANIVGESTNINAIKREDIYTNTSTVGMQLAHTVSDKSLKEVCTEFSTAYENIAIEKRKMNEKMEDVTDELNNLKKKCKQIDHQRHIVKNIRYDLEELLQSNVYKEDIKNRLEKKLESNGKEIQEQMTDFVHLSMINGIIVKIAKIHKEFCEAAGNHLEKFN.

An N-linked (GlcNAc...) asparagine glycan is attached at Asn-88. Positions 115–195 (AYENIAIEKR…GKEIQEQMTD (81 aa)) form a coiled coil.

This sequence belongs to the SWP12 family.

The protein localises to the spore wall. The sequence is that of Spore wall protein 12 (SWP12) from Enterocytozoon bieneusi (strain H348) (Microsporidian parasite).